The primary structure comprises 457 residues: Argininosuccinate lyase (457 aa).

It belongs to the lyase 1 family. Argininosuccinate lyase subfamily.

It localises to the cytoplasm. The catalysed reaction is 2-(N(omega)-L-arginino)succinate = fumarate + L-arginine. It functions in the pathway amino-acid biosynthesis; L-arginine biosynthesis; L-arginine from L-ornithine and carbamoyl phosphate: step 3/3. The polypeptide is Argininosuccinate lyase (Shigella dysenteriae serotype 1 (strain Sd197)).